The chain runs to 456 residues: Protein translocase subunit SecY (456 aa).

The Cytoplasmic portion of the chain corresponds to 1–21; it reads MEQLKEKFEPLFSVLPQVKSP. Residues 22–48 traverse the membrane as a helical segment; sequence GYRVPFREKLKWTGIILVLYFFLAQIP. At 49–59 the chain is on the extracellular side; the sequence is LYGLSANAVDQ. Positions 60 to 67 form an intramembrane region, helical; the sequence is FAQFRAVL. Residues 60–88 form a discontinuously helical membrane-spanning segment; that stretch reads FAQFRAVLAGNFGSILTLGIGPIVSASII. The stretch at 68–79 is an intramembrane region; it reads AGNFGSILTLGI. The helical intramembrane region spans 80 to 88; the sequence is GPIVSASII. Over 89–109 the chain is Cytoplasmic; that stretch reads LQLLVGGKILKLDLSRHEDKA. The helical transmembrane segment at 110–134 threads the bilayer; the sequence is FFQGLQKLLAIVFTFFEALIFVLTG. Residues 135–141 lie on the Extracellular side of the membrane; it reads SLAPSAP. The helical transmembrane segment at 142-166 threads the bilayer; sequence QFVWVLILQLTIGGILIIFLDEVVS. Topologically, residues 167–172 are cytoplasmic; it reads KWGFGS. A helical membrane pass occupies residues 173–191; that stretch reads GVGLFIAAGVSQEIIVGAF. The Extracellular portion of the chain corresponds to 192-224; sequence NPLSAPTQPGVPAGRITGFLYLLFTGQSPDFQY. Residues 225-246 form a helical membrane-spanning segment; the sequence is YVLPVLALIAVFLVVVYAESMR. At 247 to 275 the chain is on the cytoplasmic side; the sequence is VEIPISMGGGKRLSRGAVGKYPLRFIYAS. A helical transmembrane segment spans residues 276 to 297; it reads NMPVILTSALLLNVQLLANVFQ. At 298–334 the chain is on the extracellular side; the sequence is KLGYPILGTVSNGQAVDGLAYLLTAPRSIDALILDPF. Residues 335-354 traverse the membrane as a helical segment; the sequence is RVVFYAVVFIGLCVLFAWLW. Topologically, residues 355–397 are cytoplasmic; the sequence is VEISNIGPRHVARQLYQMGMQIPGFRSSRGQFEKILKRYIPTI. A helical membrane pass occupies residues 398–416; sequence TILGGAFVGLLAFVADLTG. The Extracellular segment spans residues 417–419; that stretch reads SLG. A helical membrane pass occupies residues 420–434; that stretch reads GGTGVLLTVGIVYRL. At 435–456 the chain is on the cytoplasmic side; the sequence is YEEIAQEQLMDMHPILRSFLGD.

Belongs to the SecY/SEC61-alpha family. Component of the Sec protein translocase complex. Heterotrimer consisting of alpha (SecY), beta (SecG) and gamma (SecE) subunits. The heterotrimers can form oligomers, although 1 heterotrimer is thought to be able to translocate proteins. Interacts with the ribosome. May interact with SecDF, and other proteins may be involved.

Its subcellular location is the cell membrane. Its function is as follows. The central subunit of the protein translocation channel SecYEG. Consists of two halves formed by TMs 1-5 and 6-10. These two domains form a lateral gate at the front which open onto the bilayer between TMs 2 and 7, and are clamped together by SecE at the back. The channel is closed by both a pore ring composed of hydrophobic SecY resides and a short helix (helix 2A) on the extracellular side of the membrane which forms a plug. The plug probably moves laterally to allow the channel to open. The ring and the pore may move independently. The sequence is that of Protein translocase subunit SecY from Methanothermobacter thermautotrophicus (strain ATCC 29096 / DSM 1053 / JCM 10044 / NBRC 100330 / Delta H) (Methanobacterium thermoautotrophicum).